Reading from the N-terminus, the 1941-residue chain is Myosin-2 (1941 aa).

Residues 33-82 (DAKTSVFVAEPKESFVKGTIQSREGGKVTVKTEGGATLTVKDDQVFPMNP) form the Myosin N-terminal SH3-like domain. Phosphothreonine occurs at positions 64 and 69. A Myosin motor domain is found at 86 to 784 (DKIEDMAMMT…LLGLLEEMRD (699 aa)). At Lys-130 the chain carries N6,N6,N6-trimethyllysine. Position 179 to 186 (179 to 186 (GESGAGKT)) interacts with ATP. Position 389 is a phosphotyrosine (Tyr-389). Ser-392 is subject to Phosphoserine. Thr-419 carries the phosphothreonine modification. Ser-625 is modified (phosphoserine). An actin-binding region spans residues 661-683 (LNKLMTNLRSTHPHFVRCIIPNE). Pros-methylhistidine is present on His-759. Residues 763–777 (KFGHTKVFFKAGLLG) are actin-binding. One can recognise an IQ domain in the interval 787–816 (LAQLITRTQARCRGFLARVEYQRMVERREA). A coiled-coil region spans residues 845-1941 (LLKSAETEKE…EVHTKVISEE (1097 aa)). Ser-1094 and Ser-1098 each carry phosphoserine. 2 disordered regions span residues 1128-1149 (IEAERASRAKAEKQRSDLSREL) and 1155-1174 (RLEEAGGATSAQIEMNKKRE). Positions 1130-1149 (AERASRAKAEKQRSDLSREL) are enriched in basic and acidic residues. 2 positions are modified to phosphoserine: Ser-1164 and Ser-1239. Thr-1243 is modified (phosphothreonine). Ser-1245 carries the phosphoserine modification. A Phosphothreonine modification is found at Thr-1257. Residue Ser-1263 is modified to Phosphoserine. Residue Thr-1288 is modified to Phosphothreonine. A phosphoserine mark is found at Ser-1290, Ser-1294, Ser-1305, and Ser-1308. A Phosphothreonine modification is found at Thr-1469. The residue at position 1476 (Ser-1476) is a Phosphoserine. A Phosphotyrosine modification is found at Tyr-1494. Ser-1497 carries the phosphoserine modification. The residue at position 1503 (Thr-1503) is a Phosphothreonine. Ser-1516 is modified (phosphoserine). Residue Thr-1519 is modified to Phosphothreonine. Residues Ser-1556, Ser-1576, Ser-1602, Ser-1605, Ser-1716, and Ser-1728 each carry the phosphoserine modification. Thr-1732 and Thr-1738 each carry phosphothreonine. A Phosphoserine modification is found at Ser-1741.

It belongs to the TRAFAC class myosin-kinesin ATPase superfamily. Myosin family. As to quaternary structure, muscle myosin is a hexameric protein that consists of 2 heavy chain subunits (MHC), 2 alkali light chain subunits (MLC) and 2 regulatory light chain subunits (MLC-2). Interacts with GCSAM.

The protein localises to the cytoplasm. It localises to the myofibril. In terms of biological role, myosins are actin-based motor molecules with ATPase activity essential for muscle contraction. This chain is Myosin-2, found in Homo sapiens (Human).